Consider the following 590-residue polypeptide: TPR repeat-containing protein PA4667 (590 aa).

TPR repeat units follow at residues 235 to 268, 269 to 302, 370 to 403, 405 to 438, and 508 to 541; these read VAPLLLRSRLLQSMKRSDEALPLLKAGIKEHPDD, KRVRLAYARLLVEQNRLDDAKAEFAGLVQQFPDD, LPAQLRQTDVLLKAGRVDEAAQRLDKARSEQPDY, IQLYLIEAEALSNNDQQEKAWQAIQEGLKQYPED, and PAILDSMGWINYRQGKLADAERYLRQALQRYPDH.

In Pseudomonas aeruginosa (strain ATCC 15692 / DSM 22644 / CIP 104116 / JCM 14847 / LMG 12228 / 1C / PRS 101 / PAO1), this protein is TPR repeat-containing protein PA4667.